Consider the following 378-residue polypeptide: uncharacterized protein (378 aa).

Over residues 150–176 (TTTATTSNNRFNNNNSNNNNINNNNDN) the composition is skewed to low complexity. A disordered region spans residues 150–187 (TTTATTSNNRFNNNNSNNNNINNNNDNNNKEQKKESRC). The segment covering 177–187 (NNKEQKKESRC) has biased composition (basic and acidic residues).

This is an uncharacterized protein from Dictyostelium discoideum (Social amoeba).